Consider the following 218-residue polypeptide: N-(5'-phosphoribosyl)anthranilate isomerase (218 aa).

Belongs to the TrpF family.

The enzyme catalyses N-(5-phospho-beta-D-ribosyl)anthranilate = 1-(2-carboxyphenylamino)-1-deoxy-D-ribulose 5-phosphate. It participates in amino-acid biosynthesis; L-tryptophan biosynthesis; L-tryptophan from chorismate: step 3/5. The polypeptide is N-(5'-phosphoribosyl)anthranilate isomerase (Rhodospirillum rubrum (strain ATCC 11170 / ATH 1.1.1 / DSM 467 / LMG 4362 / NCIMB 8255 / S1)).